The sequence spans 278 residues: Large ribosomal subunit protein uL2 (278 aa).

Disordered stretches follow at residues 1 to 59 (MAIR…GGHK) and 222 to 278 (RGAA…NKKR). Residues 16–27 (SSVSEFSEITRS) are compositionally biased toward polar residues. Basic residues-rich tracts occupy residues 45–59 (VHGHITTRHKGGGHK) and 269–278 (VRRRRPNKKR).

Belongs to the universal ribosomal protein uL2 family. In terms of assembly, part of the 50S ribosomal subunit. Forms a bridge to the 30S subunit in the 70S ribosome.

In terms of biological role, one of the primary rRNA binding proteins. Required for association of the 30S and 50S subunits to form the 70S ribosome, for tRNA binding and peptide bond formation. It has been suggested to have peptidyltransferase activity; this is somewhat controversial. Makes several contacts with the 16S rRNA in the 70S ribosome. This Corynebacterium urealyticum (strain ATCC 43042 / DSM 7109) protein is Large ribosomal subunit protein uL2.